The following is a 123-amino-acid chain: ATP synthase epsilon chain (123 aa).

This sequence belongs to the ATPase epsilon chain family. F-type ATPases have 2 components, CF(1) - the catalytic core - and CF(0) - the membrane proton channel. CF(1) has five subunits: alpha(3), beta(3), gamma(1), delta(1), epsilon(1). CF(0) has three main subunits: a, b and c.

Its subcellular location is the cell inner membrane. Produces ATP from ADP in the presence of a proton gradient across the membrane. The polypeptide is ATP synthase epsilon chain (Helicobacter pylori (strain G27)).